We begin with the raw amino-acid sequence, 253 residues long: 4-hydroxy-tetrahydrodipicolinate reductase (253 aa).

16–21 (GDTGRM) contributes to the NAD(+) binding site. Arginine 44 provides a ligand contact to NADP(+). Residues 85 to 87 (GTT) and 111 to 114 (CANT) each bind NAD(+). The active-site Proton donor/acceptor is histidine 144. Histidine 145 contributes to the (S)-2,3,4,5-tetrahydrodipicolinate binding site. Lysine 148 (proton donor) is an active-site residue. 154 to 155 (GT) contacts (S)-2,3,4,5-tetrahydrodipicolinate.

This sequence belongs to the DapB family.

Its subcellular location is the cytoplasm. The enzyme catalyses (S)-2,3,4,5-tetrahydrodipicolinate + NAD(+) + H2O = (2S,4S)-4-hydroxy-2,3,4,5-tetrahydrodipicolinate + NADH + H(+). The catalysed reaction is (S)-2,3,4,5-tetrahydrodipicolinate + NADP(+) + H2O = (2S,4S)-4-hydroxy-2,3,4,5-tetrahydrodipicolinate + NADPH + H(+). Its pathway is amino-acid biosynthesis; L-lysine biosynthesis via DAP pathway; (S)-tetrahydrodipicolinate from L-aspartate: step 4/4. Its function is as follows. Catalyzes the conversion of 4-hydroxy-tetrahydrodipicolinate (HTPA) to tetrahydrodipicolinate. In Chlamydia trachomatis serovar A (strain ATCC VR-571B / DSM 19440 / HAR-13), this protein is 4-hydroxy-tetrahydrodipicolinate reductase.